A 1478-amino-acid polypeptide reads, in one-letter code: Fanconi anemia group D2 protein homolog (1478 aa).

Residues 33–53 (NISVESSSGGSEENIPASQEH) form a disordered region. The segment covering 35–45 (SVESSSGGSEE) has biased composition (low complexity). Residue lysine 595 forms a Glycyl lysine isopeptide (Lys-Gly) (interchain with G-Cter in ubiquitin) linkage. Disordered regions lie at residues 896-918 (NQNQ…PEPD) and 1420-1478 (TPRS…SKCF). Over residues 1429–1442 (ENSDDELPADDTSV) the composition is skewed to acidic residues. Residues 1468 to 1478 (RSKSSSRSKCF) show a composition bias toward basic residues.

It belongs to the Fanconi anemia protein FANCD2 family. In terms of assembly, homodimer; cannot be ubiquitinated and does not bind DNA. Part of a Fanci-Fancd2 heterodimeric complex that binds and scans dsDNA for DNA damage. Interacts with Fancl (via C-terminus). Post-translationally, monoubiquitinated by Fancl in response to ionising radiation.

The protein resides in the nucleus. Functionally, required for maintenance of chromosomal stability. Together with Fancl, and probably Fanci, involved in DNA repair of damage caused by agents that induce interstrand cross-links but not agents that cause double strand breaks. Required for S phase checkpoint activation in response to ionizing radiation induced DNA damage. This is Fanconi anemia group D2 protein homolog from Drosophila melanogaster (Fruit fly).